The following is a 489-amino-acid chain: Glycogen synthase (489 aa).

Arg20 contacts ADP-alpha-D-glucose.

The protein belongs to the glycosyltransferase 1 family. Bacterial/plant glycogen synthase subfamily.

It catalyses the reaction [(1-&gt;4)-alpha-D-glucosyl](n) + ADP-alpha-D-glucose = [(1-&gt;4)-alpha-D-glucosyl](n+1) + ADP + H(+). It participates in glycan biosynthesis; glycogen biosynthesis. Its function is as follows. Synthesizes alpha-1,4-glucan chains using ADP-glucose. The chain is Glycogen synthase from Chlorobium chlorochromatii (strain CaD3).